Consider the following 356-residue polypeptide: D-amino-acid oxidase (356 aa).

Positions Met-1–Ala-17 are cleaved as a signal peptide. Residues Ala-9, Ser-44, Gly-48, and Asn-50 each contribute to the FAD site. Phe-54 is a binding site for anthranilate. Val-171 serves as a coordination point for FAD. N-linked (GlcNAc...) asparagine glycosylation is present at Asn-192. Tyr-243 serves as a coordination point for anthranilate. Tyr-243 provides a ligand contact to (R)-lactate. The N-linked (GlcNAc...) asparagine glycan is linked to Asn-262. Residues Arg-302, Ala-329, Gly-332, Tyr-333, and Gln-334 each contribute to the FAD site. Position 302 (Arg-302) interacts with anthranilate. Arg-302 provides a ligand contact to (R)-lactate.

The protein belongs to the DAMOX/DASOX family. FAD serves as cofactor.

The protein resides in the peroxisome matrix. It catalyses the reaction a D-alpha-amino acid + O2 + H2O = a 2-oxocarboxylate + H2O2 + NH4(+). It carries out the reaction D-alanine + O2 + H2O = pyruvate + H2O2 + NH4(+). The catalysed reaction is D-serine + O2 + H2O = 3-hydroxypyruvate + H2O2 + NH4(+). The enzyme catalyses D-phenylalanine + O2 + H2O = 3-phenylpyruvate + H2O2 + NH4(+). It catalyses the reaction D-lysine + O2 + H2O = 6-amino-2-oxohexanoate + H2O2 + NH4(+). It carries out the reaction D-tyrosine + O2 + H2O = 3-(4-hydroxyphenyl)pyruvate + H2O2 + NH4(+). The catalysed reaction is D-methionine + O2 + H2O = 4-methylsulfanyl-2-oxobutanoate + H2O2 + NH4(+). The enzyme catalyses D-tryptophan + O2 + H2O = indole-3-pyruvate + H2O2 + NH4(+). It catalyses the reaction D-leucine + O2 + H2O = 4-methyl-2-oxopentanoate + H2O2 + NH4(+). It carries out the reaction D-valine + O2 + H2O = 3-methyl-2-oxobutanoate + H2O2 + NH4(+). Inhibited by benzoate and hypochlorite. Its function is as follows. Catalyzes the oxidative deamination of D-amino acids with broad substrate specificity. Enables the organism to utilize D-amino acids as a source of nutrients. This is D-amino-acid oxidase from Trigonopsis variabilis (Yeast).